Consider the following 494-residue polypeptide: Glutamyl-tRNA(Gln) amidotransferase subunit A (494 aa).

Catalysis depends on charge relay system residues Lys81 and Ser156. Ser180 serves as the catalytic Acyl-ester intermediate.

Belongs to the amidase family. GatA subfamily. Heterotrimer of A, B and C subunits.

It carries out the reaction L-glutamyl-tRNA(Gln) + L-glutamine + ATP + H2O = L-glutaminyl-tRNA(Gln) + L-glutamate + ADP + phosphate + H(+). Allows the formation of correctly charged Gln-tRNA(Gln) through the transamidation of misacylated Glu-tRNA(Gln) in organisms which lack glutaminyl-tRNA synthetase. The reaction takes place in the presence of glutamine and ATP through an activated gamma-phospho-Glu-tRNA(Gln). The chain is Glutamyl-tRNA(Gln) amidotransferase subunit A from Mycolicibacterium gilvum (strain PYR-GCK) (Mycobacterium gilvum (strain PYR-GCK)).